A 467-amino-acid polypeptide reads, in one-letter code: 3-isopropylmalate dehydratase large subunit (467 aa).

[4Fe-4S] cluster-binding residues include cysteine 347, cysteine 407, and cysteine 410. A compositionally biased stretch (polar residues) spans 422–442 (QISASSSNRNFKGRQGSSSGR). Positions 422–443 (QISASSSNRNFKGRQGSSSGRT) are disordered.

This sequence belongs to the aconitase/IPM isomerase family. LeuC type 1 subfamily. In terms of assembly, heterodimer of LeuC and LeuD. Requires [4Fe-4S] cluster as cofactor.

It catalyses the reaction (2R,3S)-3-isopropylmalate = (2S)-2-isopropylmalate. Its pathway is amino-acid biosynthesis; L-leucine biosynthesis; L-leucine from 3-methyl-2-oxobutanoate: step 2/4. Functionally, catalyzes the isomerization between 2-isopropylmalate and 3-isopropylmalate, via the formation of 2-isopropylmaleate. The polypeptide is 3-isopropylmalate dehydratase large subunit (Nostoc punctiforme (strain ATCC 29133 / PCC 73102)).